The sequence spans 214 residues: Peptide methionine sulfoxide reductase B1, chloroplastic (214 aa).

The transit peptide at 1 to 53 directs the protein to the chloroplast; the sequence is MAMRQYAAATAASSSFRARPRARPSCLPAAALPLAPCCGVAWSRASYRRASVR. Low complexity predominate over residues 58-81; the sequence is ASSSSSSSSSSPSPQGQAQAQAQG. The disordered stretch occupies residues 58 to 91; that stretch reads ASSSSSSSSSSPSPQGQAQAQAQGKPNYSTSLTD. Residues 91-213 enclose the MsrB domain; it reads DEEWRKRLTK…NSASLKLKKT (123 aa). Zn(2+) is bound by residues Cys-130, Cys-133, Cys-179, and Cys-182. The Nucleophile role is filled by Cys-202.

It belongs to the MsrB Met sulfoxide reductase family. Requires Zn(2+) as cofactor. In terms of tissue distribution, expressed in leaves and flowers.

Its subcellular location is the plastid. The protein resides in the chloroplast. The catalysed reaction is L-methionyl-[protein] + [thioredoxin]-disulfide + H2O = L-methionyl-(R)-S-oxide-[protein] + [thioredoxin]-dithiol. Functionally, catalyzes the reduction of methionine sulfoxide (MetSO) to methionine in proteins. Involved in abiotic stress response. Plays a protective role against oxidative stress by restoring activity to proteins that have been inactivated by methionine oxidation. MSRB family specifically reduces the MetSO R-enantiomer. The polypeptide is Peptide methionine sulfoxide reductase B1, chloroplastic (Oryza sativa subsp. japonica (Rice)).